The primary structure comprises 374 residues: Anthranilate O-methyltransferase 2 (374 aa).

Position 18 (Y18) interacts with S-adenosyl-L-homocysteine. Q25 serves as a coordination point for anthranilate. C59, N64, D98, L99, S142, and Y143 together coordinate S-adenosyl-L-homocysteine. W164 lines the anthranilate pocket. Mg(2+) is bound by residues E261 and F263.

It belongs to the methyltransferase superfamily. Type-7 methyltransferase family. SABATH subfamily.

It carries out the reaction anthranilate + S-adenosyl-L-methionine = O-methyl anthranilate + S-adenosyl-L-homocysteine. In terms of biological role, methyltransferase involved in the biosynthesis of methyl anthranilate in response to stresses. Utilizes anthranilic acid as substrate. Produces exclusively the O-methyl ester. In Zea mays (Maize), this protein is Anthranilate O-methyltransferase 2 (AAMT2).